A 486-amino-acid polypeptide reads, in one-letter code: Nuclear distribution protein PAC1 (486 aa).

Positions 66–99 (STVLRLQKKIIDLENEISNLNNIINSTNSDNNGI) form a coiled coil. 8 WD repeats span residues 119–158 (QCEN…NTIP), 164–205 (AHTR…RTLN), 206–246 (GHEH…SLKS), 249–291 (GHSE…GVAM), 294–328 (GHSH…FPTI), 329–368 (PLEL…IAPH), 389–428 (GHSS…ETGY), and 437–483 (GHDG…NSIK).

This sequence belongs to the WD repeat LIS1/nudF family. Self-associates. Interacts with NDL1 and dynein.

The protein localises to the cytoplasm. It is found in the cytoskeleton. The protein resides in the spindle pole. In terms of biological role, positively regulates the activity of the minus-end directed microtubule motor protein dynein. Plays a central role in positioning the mitotic spindle at the bud neck during cell division. Targets cytoplasmic dynein to microtubule plus ends, thereby promoting dynein-mediated microtubule sliding along the bud cortex and consequently the movement of the mitotic spindle to the bud neck. This is Nuclear distribution protein PAC1 from Candida albicans (strain SC5314 / ATCC MYA-2876) (Yeast).